The following is a 100-amino-acid chain: UPF0213 protein YhbQ (100 aa).

The region spanning 2-77 (TPWFLYLIRT…KQLTKRQKER (76 aa)) is the GIY-YIG domain.

It belongs to the UPF0213 family.

The chain is UPF0213 protein YhbQ from Escherichia coli O7:K1 (strain IAI39 / ExPEC).